Consider the following 83-residue polypeptide: Insect toxin 2-13 (83 aa).

Residues 1 to 21 (MKLLLLLIITASMLIEGLVNA) form the signal peptide. One can recognise an LCN-type CS-alpha/beta domain in the interval 22–80 (DVYIRRHDGCKISCTVNDKYCDNECKSEGGSYGYCYAFGCWCEGLPNDKAWKSETNTCG). 4 cysteine pairs are disulfide-bonded: Cys-31-Cys-79, Cys-35-Cys-56, Cys-42-Cys-61, and Cys-46-Cys-63. Gly-80 carries the post-translational modification Glycine amide.

It belongs to the long (4 C-C) scorpion toxin superfamily. Sodium channel inhibitor family. Beta subfamily. As to expression, expressed by the venom gland.

Its subcellular location is the secreted. Functionally, depressant insect toxins cause a transient contraction paralysis followed by a slow flaccid paralysis. They bind voltage-independently to sodium channels (Nav) and block action potentials, primarily by depolarizing the axonal membrane and suppressing the sodium current. This is Insect toxin 2-13 from Leiurus hebraeus (Hebrew deathstalker scorpion).